Consider the following 174-residue polypeptide: MTQHLFMVGARGCGKTTVGQALARVLGYAFADTDDMLWRSTGKTVAEIVAKEGWTGFRARESEILTSVTQGNAVVATGGGIILSAANRRFMRARGTVVYLHATAQELSRRLRAYPEDDQRPSLTGKPMIEEIAEVLAAREKLYQEAAHHVLDASQPPDDVVSAILQQLYPSAAS.

12-17 (GCGKTT) lines the ATP pocket. Residues Thr-16 and Asp-32 each coordinate Mg(2+). Substrate-binding residues include Asp-34, Arg-58, and Gly-79. The interval 112–126 (RAYPEDDQRPSLTGK) is LID domain. An ATP-binding site is contributed by Arg-120. Arg-139 contacts substrate. Gln-155 serves as a coordination point for ATP.

This sequence belongs to the shikimate kinase family. AroL subfamily. In terms of assembly, monomer. Requires Mg(2+) as cofactor.

It is found in the cytoplasm. It catalyses the reaction shikimate + ATP = 3-phosphoshikimate + ADP + H(+). The protein operates within metabolic intermediate biosynthesis; chorismate biosynthesis; chorismate from D-erythrose 4-phosphate and phosphoenolpyruvate: step 5/7. Catalyzes the specific phosphorylation of the 3-hydroxyl group of shikimic acid using ATP as a cosubstrate. This Sodalis glossinidius (strain morsitans) protein is Shikimate kinase 2.